We begin with the raw amino-acid sequence, 201 residues long: Glutathione peroxidase 1, mitochondrial (201 aa).

The N-terminal 27 residues, 1 to 27 (MLLTRKNVAVRPARAARRDVRAMSLLG), are a transit peptide targeting the mitochondrion. Residue Sec75 is part of the active site. Position 75 (Sec75) is a non-standard amino acid, selenocysteine.

The protein localises to the mitochondrion. The catalysed reaction is 2 glutathione + H2O2 = glutathione disulfide + 2 H2O. May constitute a glutathione peroxidase-like protective system against oxidative stresses. Hydrogen peroxide, tert-butyl hydroperoxide and cumene, but not phosphatidylcholine hydroperoxide, can act as acceptors. The sequence is that of Glutathione peroxidase 1, mitochondrial from Chlamydomonas reinhardtii (Chlamydomonas smithii).